Here is a 1127-residue protein sequence, read N- to C-terminus: Caprin-2 (1127 aa).

Residues tyrosine 67–leucine 108 form a disordered region. The span at arginine 99–leucine 108 shows a compositional bias: polar residues. 2 coiled-coil regions span residues leucine 129–leucine 156 and alanine 194–threonine 216. Disordered regions lie at residues asparagine 382–valine 614, aspartate 642–valine 753, and glutamine 922–valine 975. 2 stretches are compositionally biased toward basic and acidic residues: residues lysine 402 to valine 432 and glutamate 440 to lysine 464. Composition is skewed to polar residues over residues proline 512–threonine 531 and threonine 544–proline 567. Residues leucine 588 to lysine 597 are compositionally biased toward basic and acidic residues. 2 stretches are compositionally biased toward polar residues: residues lysine 665–threonine 714 and glutamine 741–valine 753. Phosphoserine occurs at positions 948 and 949. Residues threonine 956 to methionine 970 show a composition bias toward polar residues. One can recognise a C1q domain in the interval proline 993–aspartate 1127. Residues aspartate 1078 and glutamate 1084 each coordinate Ca(2+).

Belongs to the caprin family. As to quaternary structure, homotrimer; via C1q domain. Found in a complex with LRP6, CCNY and CDK14 during G2/M stage; CAPRIN2 functions as a scaffold for the complex by binding to CCNY via its N terminus and to CDK14 via its C terminus. Interacts with LRP5. Interacts with LRP6. Detected in all tissues tested with highest levels of expression in brain and spleen.

It is found in the cytoplasm. The protein localises to the mitochondrion. The protein resides in the cell membrane. In terms of biological role, promotes phosphorylation of the Wnt coreceptor LRP6, leading to increased activity of the canonical Wnt signaling pathway. Facilitates constitutive LRP6 phosphorylation by CDK14/CCNY during G2/M stage of the cell cycle, which may potentiate cells for Wnt signaling. May regulate the transport and translation of mRNAs, modulating for instance the expression of proteins involved in synaptic plasticity in neurons. Involved in regulation of growth as erythroblasts shift from a highly proliferative state towards their terminal phase of differentiation. May be involved in apoptosis. The sequence is that of Caprin-2 from Homo sapiens (Human).